The following is a 118-amino-acid chain: BLOC-1-related complex subunit 8 (118 aa).

A compositionally biased stretch (polar residues) spans 98-107 (KEQISNSQGR). The segment at 98–118 (KEQISNSQGRSPHVSAPSASS) is disordered.

The protein belongs to the BORCS8 family.

The protein resides in the lysosome membrane. Functionally, as part of a BORC-like complex, it may play a role in the movement and localization of lysosomes at the cell periphery. Associated with the cytosolic face of lysosomes, this complex may couple lysosomes to microtubule plus-end-directed kinesin motors, driving lysosome movement toward the cell periphery. In Tetraodon nigroviridis (Spotted green pufferfish), this protein is BLOC-1-related complex subunit 8.